Here is a 506-residue protein sequence, read N- to C-terminus: MLSQPSRERAFVLALGLVVSSSLAAAAPCDIYSSGGTPCVAAHSTTRALYSAYSGPLYQVKRGSDGATTNIAPRSAGGVANAAAQDTFCASMTCLITVIYDQSGRGNHLTQAPPGGFKGPEANGYDNLASAIGAPVTLNGQKAYGVFISPGTGYRNNAASGTAIGDAAEGMYAVLDGTHYNGGCCFDYGNAETSSLDTGNGHMEAIYFGTNTVWGSGSGSGPWIMADLENGLFSGSSPANNAGDPSVSYRFLTAAIKGGPNRWAIRGANAASGSLATYYSGARPNASGYNPMSKEGAIILGIGGDNSNGAQGTFYEGVMTSGYPSDATENAVQADIVAANYAVTSLTSGPALTVGSAISLRATTSCCTTRYLAHTGSTINTQVVSSASATTLKQQATWTVRTGLANSGCFSFESKDTPGSFIRHSNFALVLNGNDGTKQFKEDATFCPQAGLNGQGSSIRSWSFPTRYFRHYSNVLYAASNGGVHTFDAAGSFNDDVSWVISSGFA.

The first 26 residues, 1–26, serve as a signal peptide directing secretion; it reads MLSQPSRERAFVLALGLVVSSSLAAA. The catalytic stretch occupies residues 27–343; the sequence is APCDIYSSGG…ADIVAANYAV (317 aa). 3 disulfides stabilise this stretch: Cys29-Cys39, Cys89-Cys94, and Cys184-Cys185. Asp227 contributes to the substrate binding site. Glu229 serves as the catalytic Nucleophile. Asn230 serves as a coordination point for substrate. The N-linked (GlcNAc...) asparagine glycan is linked to Asn285. Position 304 (Gly304) interacts with substrate. Asp305 (proton donor) is an active-site residue. The segment at 344–506 is ABD; that stretch reads TSLTSGPALT…VSWVISSGFA (163 aa). Cys409 and Cys447 are disulfide-bonded. Substrate is bound by residues His424, Asn426, Phe427, Asp443, His471, Leu476, and Asp496.

The protein belongs to the glycosyl hydrolase 54 family.

The protein localises to the secreted. It catalyses the reaction Hydrolysis of terminal non-reducing alpha-L-arabinofuranoside residues in alpha-L-arabinosides.. The protein operates within glycan metabolism; L-arabinan degradation. Its function is as follows. Alpha-L-arabinofuranosidase involved in the degradation of arabinoxylan, a major component of plant hemicellulose. Able to hydrolyze 1,5-, 1,3- and 1,2-alpha-linkages not only in L-arabinofuranosyl oligosaccharides, but also in polysaccharides containing terminal non-reducing L-arabinofuranoses in side chains, like L-arabinan, arabinogalactan and arabinoxylan. The chain is Probable alpha-L-arabinofuranosidase B (abfB) from Aspergillus clavatus (strain ATCC 1007 / CBS 513.65 / DSM 816 / NCTC 3887 / NRRL 1 / QM 1276 / 107).